The primary structure comprises 101 residues: MAKKSKIAKNEQRREIVARYAARRAELKEVLRRPSSTEAERLAAQRELRRQPRDASPTRVRNRDQIDGRPRGYLRVFGLSRVNLREQAHAGHLPGVRKSSW.

Residues 31–67 (LRRPSSTEAERLAAQRELRRQPRDASPTRVRNRDQID) are disordered. Residues 38-53 (EAERLAAQRELRRQPR) show a composition bias toward basic and acidic residues.

This sequence belongs to the universal ribosomal protein uS14 family. As to quaternary structure, part of the 30S ribosomal subunit. Contacts proteins S3 and S10.

Functionally, binds 16S rRNA, required for the assembly of 30S particles and may also be responsible for determining the conformation of the 16S rRNA at the A site. The chain is Small ribosomal subunit protein uS14A from Streptomyces coelicolor (strain ATCC BAA-471 / A3(2) / M145).